Consider the following 763-residue polypeptide: Protein translocase subunit SecA 2 (763 aa).

ATP-binding positions include Q83, 101-105 (GEGKT), and D490.

This sequence belongs to the SecA family. Monomer and homodimer. Part of the essential Sec protein translocation apparatus which comprises SecA, SecYEG and auxiliary proteins SecDF. Other proteins may also be involved.

Its subcellular location is the cell membrane. It is found in the cytoplasm. It catalyses the reaction ATP + H2O + cellular proteinSide 1 = ADP + phosphate + cellular proteinSide 2.. Part of the Sec protein translocase complex. Interacts with the SecYEG preprotein conducting channel. Has a central role in coupling the hydrolysis of ATP to the transfer of proteins into and across the cell membrane, serving as an ATP-driven molecular motor driving the stepwise translocation of polypeptide chains across the membrane. The polypeptide is Protein translocase subunit SecA 2 (Corynebacterium glutamicum (strain R)).